The sequence spans 49 residues: MVEAVYRCFKCGREVKLDLSITRDLRCPYCGSKILYKPRPKVPRRVKAI.

The Zn(2+) site is built by Cys-11, Cys-27, and Cys-30.

This sequence belongs to the archaeal Rpo12/eukaryotic RPC10 RNA polymerase subunit family. In terms of assembly, part of the RNA polymerase complex. Zn(2+) serves as cofactor.

Its subcellular location is the cytoplasm. It catalyses the reaction RNA(n) + a ribonucleoside 5'-triphosphate = RNA(n+1) + diphosphate. In terms of biological role, DNA-dependent RNA polymerase (RNAP) catalyzes the transcription of DNA into RNA using the four ribonucleoside triphosphates as substrates. This Pyrococcus furiosus (strain ATCC 43587 / DSM 3638 / JCM 8422 / Vc1) protein is DNA-directed RNA polymerase subunit Rpo12.